We begin with the raw amino-acid sequence, 147 residues long: Cytochrome c-type biogenesis protein CcmE (147 aa).

Over 1–7 (MTVRQRR) the chain is Cytoplasmic. A helical; Signal-anchor for type II membrane protein transmembrane segment spans residues 8–28 (FAMVILVVIGVSIATGLGLKA). The Periplasmic segment spans residues 29 to 147 (FQENILFFYN…KTKANTEDKL (119 aa)). Residues H123 and Y127 each coordinate heme.

This sequence belongs to the CcmE/CycJ family.

The protein resides in the cell inner membrane. Functionally, heme chaperone required for the biogenesis of c-type cytochromes. Transiently binds heme delivered by CcmC and transfers the heme to apo-cytochromes in a process facilitated by CcmF and CcmH. The chain is Cytochrome c-type biogenesis protein CcmE from Nitrosococcus oceani (strain ATCC 19707 / BCRC 17464 / JCM 30415 / NCIMB 11848 / C-107).